Consider the following 134-residue polypeptide: Cystatin-1 (134 aa).

An N-terminal signal peptide occupies residues 1–17 (MKAIYLILTVLCGFSAS). The Cystatin domain maps to 21–116 (GGWRDKDVDD…CTAIIWTRSW (96 aa)). Positions 65–69 (QVVSG) match the Secondary area of contact motif. Cystine bridges form between Cys83–Cys96 and Cys107–Cys127.

It belongs to the cystatin family. In terms of tissue distribution, expressed by the venom gland.

Its subcellular location is the secreted. In terms of biological role, inhibits various C1 cysteine proteases. This protein has no toxic activity and its function in the venom is unknown. It may play a role as a housekeeping or regulatory protein. In Chilobrachys guangxiensis (Chinese earth tiger tarantula), this protein is Cystatin-1.